A 405-amino-acid chain; its full sequence is Obg-like ATPase homolog (405 aa).

An OBG-type G domain is found at 17-283; it reads PTSGIVGLAN…CKGIASEYFD (267 aa). Residues 26-31 and Val231 contribute to the ATP site; that span reads NVGKST. The TGS domain maps to 312–398; it reads NLISFFTCGP…QDNDIALFKA (87 aa).

Belongs to the TRAFAC class OBG-HflX-like GTPase superfamily. OBG GTPase family.

Its subcellular location is the mitochondrion. Functionally, hydrolyzes ATP, and can also hydrolyze GTP with lower efficiency. Has lower affinity for GTP. The protein is Obg-like ATPase homolog (YLF2) of Saccharomyces cerevisiae (strain ATCC 204508 / S288c) (Baker's yeast).